The sequence spans 287 residues: Pyridoxal kinase PdxY (287 aa).

Substrate contacts are provided by residues Ser-10 and 45 to 46 (TQ). ATP contacts are provided by residues Asp-112, Ala-144, Glu-149, Lys-182, and 209–212 (RPLV). Position 224 (Asp-224) interacts with substrate.

This sequence belongs to the pyridoxine kinase family. PdxY subfamily. Homodimer. The cofactor is Mg(2+).

The enzyme catalyses pyridoxal + ATP = pyridoxal 5'-phosphate + ADP + H(+). It functions in the pathway cofactor metabolism; pyridoxal 5'-phosphate salvage; pyridoxal 5'-phosphate from pyridoxal: step 1/1. Its function is as follows. Pyridoxal kinase involved in the salvage pathway of pyridoxal 5'-phosphate (PLP). Catalyzes the phosphorylation of pyridoxal to PLP. The chain is Pyridoxal kinase PdxY from Shigella dysenteriae serotype 1 (strain Sd197).